A 541-amino-acid polypeptide reads, in one-letter code: Synaptotagmin-1 (541 aa).

Residues 1–11 (MGFFSTILGFC) lie on the Extracellular side of the membrane. The chain crosses the membrane as a helical span at residues 12 to 32 (GFGVGISLGLVIGYVLFVYLL). At 33–541 (PNDVKDPEIR…QIELEWRTAS (509 aa)) the chain is on the cytoplasmic side. The 183-residue stretch at 67–249 (DFDRVDWINR…WPKTLVVPIL (183 aa)) folds into the SMP-LTD domain. Residues 227–509 (QEQIKDQVAN…TLGYVDIPVV (283 aa)) are phospholipid binding. 2 consecutive C2 domains span residues 240–362 (WPKT…AFTL) and 401–521 (GFEE…NQKF). Ca(2+) is bound by residues D276, D282, D332, and E334.

The protein belongs to the synaptotagmin family. As to quaternary structure, interacts with cabbage leaf curl virus (CaLCuV) BC1 protein and tobacco mosaic virus (TMV) MP protein. Interacts with ROSY1. Ca(2+) is required as a cofactor. In terms of tissue distribution, expressed in roots, shoots, rosette and cauline leaves, inflorescences, and siliques. In roots, expressed in vascular bundle, epidermis, the differential zone of the tips of root hairs, and the quiescent center and columella of root tips.

The protein localises to the cell membrane. Its subcellular location is the endosome membrane. Functionally, plays an important role in maintaining plasma membrane integrity during freezing and osmotic stresses. May function in membrane resealing during calcium-dependent freezing tolerance. May regulate endocytosis and endosome recycling at the plasma membrane and cell-to-cell trafficking of cabbage leaf curl virus (CaLCuV) and tobacco mosaic virus (TMV) movement proteins via plasmodesmata. This Arabidopsis thaliana (Mouse-ear cress) protein is Synaptotagmin-1 (SYT1).